The sequence spans 224 residues: Octanoyltransferase (224 aa).

The 196-residue stretch at Glu-29–Pro-224 folds into the BPL/LPL catalytic domain. Substrate-binding positions include Arg-68–His-75, Ala-157–Gly-159, and Gly-170–Ala-172. Cys-188 (acyl-thioester intermediate) is an active-site residue.

It belongs to the LipB family.

It is found in the cytoplasm. It carries out the reaction octanoyl-[ACP] + L-lysyl-[protein] = N(6)-octanoyl-L-lysyl-[protein] + holo-[ACP] + H(+). Its pathway is protein modification; protein lipoylation via endogenous pathway; protein N(6)-(lipoyl)lysine from octanoyl-[acyl-carrier-protein]: step 1/2. Functionally, catalyzes the transfer of endogenously produced octanoic acid from octanoyl-acyl-carrier-protein onto the lipoyl domains of lipoate-dependent enzymes. Lipoyl-ACP can also act as a substrate although octanoyl-ACP is likely to be the physiological substrate. The sequence is that of Octanoyltransferase from Polaromonas naphthalenivorans (strain CJ2).